Here is a 2084-residue protein sequence, read N- to C-terminus: RNA-directed RNA polymerase L (2084 aa).

The endonuclease stretch occupies residues Glu-20–Leu-221. Mn(2+) is bound by residues His-80, Asp-112, and Glu-126. The active-site For endonuclease activity is the Lys-145. Positions Ser-969 to Thr-1172 constitute a RdRp catalytic domain. Asp-1127 is a Mg(2+) binding site. The interval Ala-1695–Glu-1810 is cap-binding.

This sequence belongs to the Bunyavirales RNA polymerase family. Homomultimer. Interacts with the glycoprotein N; this interaction allows efficient polymerase packaging into virus particles. Interacts with nucleoprotein N. Mn(2+) serves as cofactor. Requires Mg(2+) as cofactor.

The protein resides in the host Golgi apparatus. The protein localises to the host endoplasmic reticulum. Its subcellular location is the host endoplasmic reticulum-Golgi intermediate compartment. It localises to the virion. The catalysed reaction is RNA(n) + a ribonucleoside 5'-triphosphate = RNA(n+1) + diphosphate. With respect to regulation, inhibited by Baloxavir acid (BXA). In terms of biological role, RNA-dependent RNA polymerase, which is responsible for the replication and transcription of the viral RNA genome using antigenomic RNA as an intermediate. During transcription, synthesizes subgenomic RNAs and assures their capping by a cap-snatching mechanism, which involves the endonuclease activity cleaving the host capped pre-mRNAs. These short capped RNAs are then used as primers for viral transcription. The 3'-end of subgenomic mRNAs molecules are not polyadenylated. During replication, the polymerase binds the 5' and 3' vRNA extremities at distinct sites. In turn, significant conformational changes occur in the polymerase and in vRNA to initiate active RNA synthesis. As a consequence of the use of the same enzyme for both transcription and replication, these mechanisms need to be well coordinated. This is RNA-directed RNA polymerase L from Dabie bandavirus (Severe fever with thrombocytopenia virus).